The primary structure comprises 911 residues: Anoctamin-6 (911 aa).

The Cytoplasmic segment spans residues Met1–Ala301. A helical membrane pass occupies residues Trp302–Leu322. Over Tyr323–Ser376 the chain is Extracellular. N-linked (GlcNAc...) asparagine glycosylation occurs at Asn330. Intrachain disulfides connect Cys331–Cys372, Cys338–Cys365, Cys349–Cys807, Cys352–Cys356, and Cys596–Cys601. N-linked (GlcNAc...) asparagine glycosylation is present at Asn362. A helical transmembrane segment spans residues Phe377 to Trp397. At Lys398 to Cys456 the chain is on the cytoplasmic side. A helical membrane pass occupies residues Ala457–Tyr477. Over Arg478–Ser510 the chain is Extracellular. N-linked (GlcNAc...) asparagine glycosylation occurs at Asn494. The helical transmembrane segment at Ile511–Val531 threads the bilayer. Over Ala532–Thr552 the chain is Cytoplasmic. A helical membrane pass occupies residues Met553–Phe573. Residues Lys574–Leu602 are Extracellular-facing. A helical membrane pass occupies residues Leu603–Ile622. Residues Gln623–Leu664 are Cytoplasmic-facing. Ca(2+) contacts are provided by Glu624, Glu667, and Glu670. 2 helical membrane-spanning segments follow: residues Phe665–Phe685 and Pro686–Lys706. Topologically, residues Leu707–Gly723 are cytoplasmic. Residues Ala724–Ile744 traverse the membrane as a helical segment. Residues Ala745–Ala837 are Extracellular-facing. N-linked (GlcNAc...) asparagine glycosylation is found at Asn778, Asn785, and Asn803. Residues Phe838 to Pro858 traverse the membrane as a helical segment. The Cytoplasmic portion of the chain corresponds to Asp859–Glu911.

It belongs to the anoctamin family. As to quaternary structure, homodimer. As to expression, predominant expression seen in epithelial tissues. Also found in skeletal system where it is primarily expressed in osteoblasts.

Its subcellular location is the cell membrane. It carries out the reaction a 1,2-diacyl-sn-glycero-3-phospho-L-serine(in) = a 1,2-diacyl-sn-glycero-3-phospho-L-serine(out). The enzyme catalyses a beta-D-galactosyl-(1&lt;-&gt;1')-N-acylsphing-4-enine(out) = a beta-D-galactosyl-(1&lt;-&gt;1')-N-acylsphing-4-enine(in). The catalysed reaction is a 1,2-diacyl-sn-glycero-3-phosphocholine(in) = a 1,2-diacyl-sn-glycero-3-phosphocholine(out). Exhibits synergistic gating by Ca(2+) and voltage. Inhibited by some non-specific cation channel blockers such as: ruthenium red, 2-aminoethyl diphenylborinate (2APB), gadolinium and cadmium ions. Small-conductance calcium-activated nonselective cation (SCAN) channel which acts as a regulator of phospholipid scrambling in platelets, osteoblasts and fetal thymocytes. Phospholipid scrambling results in surface exposure of phosphatidylserine which in platelets is essential to trigger the clotting system whereas in osteoblasts is essential for the deposition of hydroxyapatite during bone mineralization. Has calcium-dependent phospholipid scramblase activity; scrambles phosphatidylserine, phosphatidylcholine and galactosylceramide. Can generate outwardly rectifying chloride channel currents in airway epithelial cells and Jurkat T lymphocytes. The polypeptide is Anoctamin-6 (Ano6) (Mus musculus (Mouse)).